A 329-amino-acid polypeptide reads, in one-letter code: Epoxide hydrolase (329 aa).

Residues 35 to 308 (PAVLFCHGFP…DNVGHWVQHE (274 aa)) enclose the AB hydrolase-1 domain. The active-site Nucleophile is the Asp111. Tyr242 (proton donor) is an active-site residue. His303 (proton acceptor) is an active-site residue.

The protein belongs to the AB hydrolase superfamily. Epoxide hydrolase family. In terms of assembly, homodimer.

The catalysed reaction is an epoxide + H2O = an ethanediol. The enzyme catalyses (R)-styrene oxide + H2O = (R)-styrene glycol. It catalyses the reaction (S)-styrene oxide + H2O = (S)-styrene glycol. It carries out the reaction 3,4-epoxy-1-cyclohexene + H2O = cyclohex-3-ene-1,2-diol. Its function is as follows. Catalyzes the hydrolysis of various epoxides into diols. In vitro, shows the strongest activity toward aromatic and cyclic aliphatic epoxide compounds, since it shows strong activity toward (R)-styrene oxide, (S)-styrene oxide, and 3,4-epoxy-1-cyclohexene, but very weak activity toward (R)-epichlorohydrin, (S)-epichlorohydrin, and 1,2-epoxy-9-decene. The protein is Epoxide hydrolase of Caballeronia sordidicola (Burkholderia sordidicola).